Here is a 331-residue protein sequence, read N- to C-terminus: Hydroxyacylglutathione hydrolase 1, mitochondrial (331 aa).

A mitochondrion-targeting transit peptide spans 1–76 (MPVISKASST…HFCSISNMPS (76 aa)). 2 residues coordinate Zn(2+): His131 and His133. The Fe cation site is built by Asp135 and His136. Positions 189 and 208 each coordinate Zn(2+). Asp208 lines the Fe cation pocket. Residue 246–248 (REN) participates in substrate binding.

This sequence belongs to the metallo-beta-lactamase superfamily. Glyoxalase II family. Fe(2+) is required as a cofactor. It depends on Fe(3+) as a cofactor. Zn(2+) serves as cofactor. Mainly expressed in roots, flowers and flower buds. Also detected in leaves.

The protein localises to the mitochondrion. It catalyses the reaction an S-(2-hydroxyacyl)glutathione + H2O = a 2-hydroxy carboxylate + glutathione + H(+). It participates in secondary metabolite metabolism; methylglyoxal degradation; (R)-lactate from methylglyoxal: step 2/2. Thiolesterase that catalyzes the hydrolysis of S-D-lactoyl-glutathione to form glutathione and D-lactic acid. This chain is Hydroxyacylglutathione hydrolase 1, mitochondrial (GLX2-1), found in Arabidopsis thaliana (Mouse-ear cress).